Here is a 242-residue protein sequence, read N- to C-terminus: UPF0173 metal-dependent hydrolase APE_1117 (242 aa).

This sequence belongs to the UPF0173 family.

This chain is UPF0173 metal-dependent hydrolase APE_1117, found in Aeropyrum pernix (strain ATCC 700893 / DSM 11879 / JCM 9820 / NBRC 100138 / K1).